A 238-amino-acid chain; its full sequence is Alpha-tubulin N-acetyltransferase (238 aa).

The region spanning 1–196 (MEFDFDISQS…NNFVVFEDLF (196 aa)) is the N-acetyltransferase domain. Residues 129 to 142 (FYVH…GNGK) and 165 to 174 (SFKFLSFLQK) each bind acetyl-CoA.

Belongs to the acetyltransferase ATAT1 family.

The catalysed reaction is L-lysyl-[alpha-tubulin] + acetyl-CoA = N(6)-acetyl-L-lysyl-[alpha-tubulin] + CoA + H(+). In terms of biological role, specifically acetylates 'Lys-40' in alpha-tubulin on the lumenal side of microtubules. Promotes microtubule destabilization and accelerates microtubule dynamics; this activity may be independent of acetylation activity. Acetylates alpha-tubulin with a slow enzymatic rate, due to a catalytic site that is not optimized for acetyl transfer. Enters the microtubule through each end and diffuses quickly throughout the lumen of microtubules. Acetylates only long/old microtubules because of its slow acetylation rate since it does not have time to act on dynamically unstable microtubules before the enzyme is released. The chain is Alpha-tubulin N-acetyltransferase from Trichoplax adhaerens (Trichoplax reptans).